A 140-amino-acid chain; its full sequence is Class I hydrophobin C (140 aa).

Residues 1–23 (MKFFVPAFLFAATAMALPGSGSA) form the signal peptide. 4 disulfides stabilise this stretch: cysteine 41–cysteine 114, cysteine 49–cysteine 108, cysteine 50–cysteine 85, and cysteine 115–cysteine 133.

It belongs to the fungal hydrophobin family.

The protein localises to the secreted. It is found in the cell wall. Aerial growth, conidiation, and dispersal of filamentous fungi in the environment rely upon a capability of their secreting small amphipathic proteins called hydrophobins (HPBs) with low sequence identity. Class I can self-assemble into an outermost layer of rodlet bundles on aerial cell surfaces, conferring cellular hydrophobicity that supports fungal growth, development and dispersal; whereas Class II form highly ordered films at water-air interfaces through intermolecular interactions but contribute nothing to the rodlet structure. In P.expansum, hydrophobins contribute to germination, tolerance to cold stress and mycotoxins patulin and citrinin production. HfbC is involved in the virulence on apple. The chain is Class I hydrophobin C from Penicillium expansum (Blue mold rot fungus).